An 842-amino-acid polypeptide reads, in one-letter code: Alpha-glucan phosphorylase, H isozyme (842 aa).

Position 688 is an N6-(pyridoxal phosphate)lysine (K688).

This sequence belongs to the glycogen phosphorylase family. Pyridoxal 5'-phosphate serves as cofactor.

The protein resides in the cytoplasm. It catalyses the reaction [(1-&gt;4)-alpha-D-glucosyl](n) + phosphate = [(1-&gt;4)-alpha-D-glucosyl](n-1) + alpha-D-glucose 1-phosphate. Functionally, phosphorylase is an important allosteric enzyme in carbohydrate metabolism. Enzymes from different sources differ in their regulatory mechanisms and in their natural substrates. However, all known phosphorylases share catalytic and structural properties. Its function is as follows. The H isoform exhibits higher affinity for branched polyglucans such as soluble starch or glycogen. This is Alpha-glucan phosphorylase, H isozyme from Vicia faba (Broad bean).